The chain runs to 146 residues: Hemoglobin subunit beta (146 aa).

At V1 the chain carries N-acetylvaline. Residues 2 to 146 (HLTGEEKAAV…VANALAHKYH (145 aa)) enclose the Globin domain. Phosphothreonine is present on T12. A Phosphoserine modification is found at S44. Residue K59 is modified to N6-acetyllysine. H63 serves as a coordination point for heme b. Residue K82 is modified to N6-acetyllysine. Residue H92 participates in heme b binding. At C93 the chain carries S-nitrosocysteine. N6-acetyllysine is present on K144.

It belongs to the globin family. In terms of assembly, heterotetramer of two alpha chains and two beta chains. In terms of tissue distribution, red blood cells.

Its function is as follows. Involved in oxygen transport from the lung to the various peripheral tissues. The chain is Hemoglobin subunit beta (HBB) from Ailurus fulgens (Himalayan red panda).